The sequence spans 243 residues: Anti-H(O) lectin 2 (243 aa).

N115 carries an N-linked (GlcNAc...) asparagine glycan. Mn(2+) is bound by residues E127 and D129. The Ca(2+) site is built by D129, N136, and D139. Residues D139 and H144 each contribute to the Mn(2+) site.

Belongs to the leguminous lectin family. Homodimer.

Its function is as follows. Lactose- or galactose-binding anti-H(O) lectin. In Cytisophyllum sessilifolium (Sessile-leaved cytisus), this protein is Anti-H(O) lectin 2.